Reading from the N-terminus, the 533-residue chain is Na(+)/H(+) antiporter NhaB (533 aa).

11 helical membrane passes run 10 to 30 (IGNFLGNSPKWYKIAILSFLI), 67 to 87 (PGGLLAIQAVAIGMTSASQVL), 96 to 116 (VLLLLVFMVAGIYFMKQLLLF), 131 to 165 (VSLMFCLASAFLSAFLDALTVIAVIITVAVGFYSI), 209 to 229 (LLMHAGVGTALGGVCTMVGEP), 247 to 267 (IRMSPVTVPVLFAGILTCFLV), 310 to 330 (AFVGVWLIAGLALHLASVGLI), 355 to 375 (EEALPFTALLAVFFAVVAVII), 396 to 416 (LVIFYIANGLLSMVSDNVFVG), 454 to 474 (ATPNGQAAFLFLLTSALAPLI), and 481 to 501 (MVWMALPYTIVLSIVGVMAIE).

This sequence belongs to the NhaB Na(+)/H(+) (TC 2.A.34) antiporter family.

It localises to the cell inner membrane. The enzyme catalyses 2 Na(+)(in) + 3 H(+)(out) = 2 Na(+)(out) + 3 H(+)(in). In terms of biological role, na(+)/H(+) antiporter that extrudes sodium in exchange for external protons. The polypeptide is Na(+)/H(+) antiporter NhaB (Shewanella sp. (strain MR-4)).